An 863-amino-acid polypeptide reads, in one-letter code: Protein ARG5,6, mitochondrial (863 aa).

A mitochondrion-targeting transit peptide spans M1–S65. Positions K353–S505 constitute an N-acetyltransferase domain. Position 359 is a phosphoserine (S359). C675 is a catalytic residue.

It in the N-terminal section; belongs to the acetylglutamate kinase family. The protein in the C-terminal section; belongs to the NAGSA dehydrogenase family. The protein precursor is cleaved into the two biologically active enzymes, the kinase and the reductase.

The protein resides in the mitochondrion. The enzyme catalyses N-acetyl-L-glutamate 5-semialdehyde + phosphate + NADP(+) = N-acetyl-L-glutamyl 5-phosphate + NADPH + H(+). It catalyses the reaction N-acetyl-L-glutamate + ATP = N-acetyl-L-glutamyl 5-phosphate + ADP. It participates in amino-acid biosynthesis; L-arginine biosynthesis; N(2)-acetyl-L-ornithine from L-glutamate: step 2/4. Its pathway is amino-acid biosynthesis; L-arginine biosynthesis; N(2)-acetyl-L-ornithine from L-glutamate: step 3/4. Its activity is regulated as follows. The kinase activity is inhibited by arginine. The polypeptide is Protein ARG5,6, mitochondrial (ARG5,6) (Saccharomyces cerevisiae (strain ATCC 204508 / S288c) (Baker's yeast)).